We begin with the raw amino-acid sequence, 532 residues long: CTP synthase (532 aa).

An amidoligase domain region spans residues 1-267 (MTKYIFVTGG…DDIVLEHLQL (267 aa)). A CTP-binding site is contributed by Ser13. Position 13 (Ser13) interacts with UTP. Position 14–19 (14–19 (SIGKGI)) interacts with ATP. Tyr54 is an L-glutamine binding site. Residue Asp71 participates in ATP binding. The Mg(2+) site is built by Asp71 and Glu141. Residues 148 to 150 (DIE), 188 to 193 (KTKPTQ), and Lys224 contribute to the CTP site. UTP contacts are provided by residues 188-193 (KTKPTQ) and Lys224. In terms of domain architecture, Glutamine amidotransferase type-1 spans 292 to 532 (RIGLVGKYVS…DFVGAALKNK (241 aa)). Residue Gly354 coordinates L-glutamine. Catalysis depends on Cys381, which acts as the Nucleophile; for glutamine hydrolysis. L-glutamine contacts are provided by residues 382–385 (LGMQ), Glu405, and Arg462. Active-site residues include His507 and Glu509.

The protein belongs to the CTP synthase family. Homotetramer.

The enzyme catalyses UTP + L-glutamine + ATP + H2O = CTP + L-glutamate + ADP + phosphate + 2 H(+). It carries out the reaction L-glutamine + H2O = L-glutamate + NH4(+). It catalyses the reaction UTP + NH4(+) + ATP = CTP + ADP + phosphate + 2 H(+). It functions in the pathway pyrimidine metabolism; CTP biosynthesis via de novo pathway; CTP from UDP: step 2/2. With respect to regulation, allosterically activated by GTP, when glutamine is the substrate; GTP has no effect on the reaction when ammonia is the substrate. The allosteric effector GTP functions by stabilizing the protein conformation that binds the tetrahedral intermediate(s) formed during glutamine hydrolysis. Inhibited by the product CTP, via allosteric rather than competitive inhibition. Its function is as follows. Catalyzes the ATP-dependent amination of UTP to CTP with either L-glutamine or ammonia as the source of nitrogen. Regulates intracellular CTP levels through interactions with the four ribonucleotide triphosphates. This chain is CTP synthase, found in Listeria monocytogenes serovar 1/2a (strain ATCC BAA-679 / EGD-e).